The following is a 361-amino-acid chain: Large ribosomal subunit protein uL3 (361 aa).

The segment at 339–361 (RPPKKKPPVQRPQITYVSVESKQ) is disordered. The segment covering 350–361 (PQITYVSVESKQ) has biased composition (polar residues).

It belongs to the universal ribosomal protein uL3 family. In terms of assembly, part of the 50S ribosomal subunit. Forms a cluster with proteins L14 and L24e.

Its function is as follows. One of the primary rRNA binding proteins, it binds directly near the 3'-end of the 23S rRNA, where it nucleates assembly of the 50S subunit. This Pyrococcus abyssi (strain GE5 / Orsay) protein is Large ribosomal subunit protein uL3.